The following is a 467-amino-acid chain: MRIPYSNLFSAAAGLALFASTACAAPVMPATDSDIAHAGIRPELDNAFYDSHGEAATPKHKPHAGPNAAPLLSASNADTTGLDSHYIIVLQPDLSEQEFQAHTNWVSEMHQMDIASQEDEYYDTSDSNYMFGLKHVYDFGEDSFKGYSGQFSSNIVEQIRLHPHVIAVERDQVVSIKKLETQSGAPWGLARISHKSVKYDDIGKYVYDSSAGDNITAYVVDTGVSIHHVEFEGRASWGATIPSGDVDEDNNGHGTHVAGTIASRAYGVAKKAEIVAVKVLRSSGSGTMADVIAGVEWTVRHHKSSGKKTSVGNMSLGGGNSFVLDMAVDSAVTNGVIYAVAAGNEYDDACYSSPAASKKAITVGASTINDQMAYFSNYGSCVDIFAPGLNILSTWIGSNTSTNTISGTSMATPHVAGLSAYYLGLHPAASASEVKDAIIKMGIHDVLLSIPVGSSTINLLAFNGAQE.

In terms of domain architecture, Inhibitor I9 spans 86–176 (YIIVLQPDLS…AVERDQVVSI (91 aa)). The region spanning 186–467 (PWGLARISHK…NLLAFNGAQE (282 aa)) is the Peptidase S8 domain. Catalysis depends on charge relay system residues aspartate 221, histidine 253, and serine 409.

It belongs to the peptidase S8 family.

In Schizosaccharomyces pombe (strain 972 / ATCC 24843) (Fission yeast), this protein is Sexual differentiation process putative subtilase-type proteinase isp6 (isp6).